An 850-amino-acid polypeptide reads, in one-letter code: MSSKFPLGVRFITHSLPCTRLASMNSGALIYSFRSVPVLSKAFPFRLKYIGLGSRVNFSTRPERSQPEFARRSGAGGEIRASKSLIEDEAELSDWVSDLRTSSLRGKFTSDEDNADPEVVRRNVDRDTSRGPRRGREGQSDRFGGAKRGKEGEMDRFGSPNRRRTSGEPADSFGNKRLGDREGSRNGRVQGKSSESSFRGRSDRNVDSGSSFRGRSDKNVDSGSSFRGRNDRNVDSGSSFRGRSDRNVDSGSSFRGRSDRNVDSGSSFRGRNDRNVDSGSSFRGRNDRNVESGFRREPGSENNRGLGKQTRGLSLEEEDSSDDDENRVGLGNIDDLPSEDSSDEDDENDEPLIKKAASAKAVQTDKPTGEHVKTSDSYLSKTRFDQFPLSPLSLKAIKDAGFETMTVVQEATLPIILQGKDVLAKAKTGTGKTVAFLLPAIEAVIKSPPASRDSRQPPIIVLVVCPTRELASQAAAEANTLLKYHPSIGVQVVIGGTKLPTEQRRMQTNPCQILVATPGRLKDHIENTSGFATRLMGVKVLVLDEADHLLDMGFRRDIERIIAAVPKQRQTFLFSATVPEEVRQICHVALKRDHEFINCVQEGSGETHQKVTQMYMIASLDRHFSLLHVLLKEHIADNVDYKVIIFCTTAMVTRLVADLLSQLSLNVREIHSRKPQSYRTRVSDEFRKSKAIILVTSDVSARGVDYPDVSLVVQMGLPSDREQYIHRLGRTGRKGKEGEGVLLLAPWEEYFMSSVKDLPITKSPLPPIDPEAVKRVQKGLSQVEMKNKEAAYQAWLGYYKSQKMIARDTTRLVELANEFSRSMGLDSPPAIPKNVLGKMGLKNVPGLRTK.

Disordered regions lie at residues 60-82 (TRPE…IRAS) and 106-350 (GKFT…ENDE). Basic and acidic residues predominate over residues 61-71 (RPERSQPEFAR). Thr-109 is subject to Phosphothreonine. A Phosphoserine modification is found at Ser-110. 2 stretches are compositionally biased toward basic and acidic residues: residues 118 to 140 (EVVR…EGQS) and 284 to 299 (GRND…REPG). Acidic residues-rich tracts occupy residues 315–325 (LEEEDSSDDDE) and 336–350 (LPSE…ENDE). The Q motif signature appears at 382–410 (TRFDQFPLSPLSLKAIKDAGFETMTVVQE). The Helicase ATP-binding domain occupies 413 to 596 (LPIILQGKDV…HVALKRDHEF (184 aa)). 426–433 (AKTGTGKT) serves as a coordination point for ATP. The short motif at 544-547 (DEAD) is the DEAD box element. Residues 630 to 777 (LLKEHIADNV…IDPEAVKRVQ (148 aa)) enclose the Helicase C-terminal domain.

Belongs to the DEAD box helicase family.

The enzyme catalyses ATP + H2O = ADP + phosphate + H(+). The polypeptide is DEAD-box ATP-dependent RNA helicase 26 (RH26) (Arabidopsis thaliana (Mouse-ear cress)).